Here is a 593-residue protein sequence, read N- to C-terminus: Developmental and secondary metabolism regulator VEL1 (593 aa).

The span at 1-16 (MSNIVVSNETKSQSVR) shows a compositional bias: polar residues. Residues 1-21 (MSNIVVSNETKSQSVRTTKDG) form a disordered region. In terms of domain architecture, Velvet spans 21–212 (GRQIRYNLQV…AEQGCRVRIR (192 aa)). The Nuclear localization signal signature appears at 35-40 (ERARAC). The disordered stretch occupies residues 218 to 569 (RRRENKSSKE…PGSPDMEEPM (352 aa)). A compositionally biased stretch (low complexity) spans 310–326 (PSYGSNQPQYSQQYQTP). Pro residues predominate over residues 327–340 (QPAPMMQPPQPPQH). 2 stretches are compositionally biased toward low complexity: residues 341-360 (STPYSQHSQHSSYSSQHQAQ) and 367-389 (QQYGYSNYQQQPQQPQSQSQPQY). 2 stretches are compositionally biased toward polar residues: residues 413 to 429 (SSITQSPAQQYTASSHP) and 440 to 449 (GRSQQMSQPL). Residues 443 to 487 (QQMSQPLHSSPQSYASSAPSHQSLPSLRPIVADKLEPVSPSYQSP) form a PEST region. The segment covering 450–465 (HSSPQSYASSAPSHQS) has biased composition (low complexity). 2 stretches are compositionally biased toward polar residues: residues 482-505 (PSYQSPPTSMSAAISVNSDGSNQH) and 512-534 (NPQTQGLPPMSATSNKRSFSSTF).

The protein belongs to the velvet family. VeA subfamily. As to quaternary structure, component of the heterotrimeric velvet complex composed of LAE1, VEL1 and VEL2; VEL1 acting as a bridging protein between LAE1 and VEL2.

The protein resides in the nucleus. It is found in the cytoplasm. Component of the velvet transcription factor complex that controls sexual/asexual developmental ratio in response to light, promoting sexual development in the darkness while stimulating asexual sporulation under illumination. The velvet complex acts as a global regulator for secondary metabolite gene expression. Controls the expression of the T-toxin gene cluster. Promotes oxidative stress tolerance and acts as a virulence factors during infection. Negatively regulate mycelial pigmentation and controls sexual development, as well as asexual development during vegetative growth. The polypeptide is Developmental and secondary metabolism regulator VEL1 (Cochliobolus heterostrophus (strain C5 / ATCC 48332 / race O) (Southern corn leaf blight fungus)).